The following is a 32-amino-acid chain: YYVWIGLRWVNIDCVEGNWSDYSSVSYENLVR.

As to quaternary structure, dimer; disulfide-linked. As to expression, expressed by the venom gland.

It is found in the secreted. Functionally, interferes with one step of hemostasis (modulation of platelet aggregation, or coagulation cascade, for example). The polypeptide is Snaclec (Bothrops diporus (Chaco lancehead)).